Reading from the N-terminus, the 950-residue chain is Synaptotagmin-like protein 2 (950 aa).

Positions 1-57 (MIDLSFLTEEEQDAILKVLQRDAALKRAEEERVRHLPEKIKDDQQLKNMSGQWFYEA) constitute a RabBD domain. 3 disordered regions span residues 78–98 (RKKL…AKES), 116–289 (VEEP…ETLR), and 361–620 (ESDQ…SSSG). Residues 87-97 (QNKDTAMRAKE) are compositionally biased toward basic and acidic residues. Composition is skewed to polar residues over residues 140 to 150 (IDMSQESTRTP) and 173 to 183 (LQQTKPEQSKT). The segment covering 193-205 (KEGELSESKEKSS) has biased composition (basic and acidic residues). The segment covering 219-230 (QTVSTEPENASH) has biased composition (polar residues). Over residues 246–264 (NDLEKDDNQSFPRQRRDSL) the composition is skewed to basic and acidic residues. Over residues 434-445 (VESSSVINGQQE) the composition is skewed to polar residues. Basic and acidic residues-rich tracts occupy residues 479–502 (HSFR…LERR) and 531–544 (ELVR…KADQ). The span at 557 to 567 (TVPSLPDNQFS) shows a compositional bias: polar residues. The segment covering 608–620 (SPSSLTNLSSSSG) has biased composition (low complexity). C2 domains follow at residues 644-769 (VKGS…LKWY) and 784-913 (NRGE…VDWM).

In terms of assembly, monomer. Binds NRXN1. Binds RAB27A that has been activated by GTP-binding. Interacts with RAB27B. In terms of processing, isoform 1 is highly susceptible to proteolytic degradation and is stabilized by the interaction with RAB27A. In terms of tissue distribution, highly expressed in brain, lung, kidney, testis and in embryos after day 7. Detected at lower levels in skeletal muscle. Expressed in pancreatic alpha cells. Isoform 6 is highly expressed in brain, but not detectable in the other tissues tested. Isoform 1 is expressed abundantly in the stomach and is predominantly localized at the apical region of gastric-surface mucus cells. Isoform 11 is expressed in cytotoxic T-lymphocytes (CTL).

Its subcellular location is the melanosome membrane. The protein localises to the cell membrane. Functionally, isoform 11 acts as a RAB27A effector protein and plays a role in cytotoxic granule exocytosis in lymphocytes. Required for cytotoxic granule docking at the immunologic synapse. Isoform 1 may play a role in melanosome transport and vesicle trafficking. It controls melanosome distribution in the cell periphery and regulates melanocyte morphology. Isoform 1 acts as a positive mediator of mucus secretion by the surface mucus cells of the stomach. Mediates basal mucus secretion by gastric surface cells by promoting the proper granule biognesis and docking of mucus granules with the apical plasma membrane. In Mus musculus (Mouse), this protein is Synaptotagmin-like protein 2 (Sytl2).